The sequence spans 351 residues: MNLRGVFQDFNPSKFLIYACLLLFSVLLSLRLDGIIQWSYWAVFAPIWLWKLMVIIGASVGTGVWAHNPQYRAEGETCVEFKAMLIAVGIHLLLLTFEVLVCERVERASIPYWLLVFMPLFFVSPVSVAACVWGFRHDRSLELEILCSVNILQFIFIALKLDGIISWPWLVVCVPLWILMSFLCLVVLYYIVWSVLFLRSMDVIAEQRRTHITMAISWMTIVVPLLTFEILLVHKLDNHYSPNYVPVFVPLWVSLVTLMVTTFGQKGGNHWWFGIRKDFCQFLLELFPFLREYGNISYDLHHEDSDMSEELPIHEVPKIPTMFRKKTGVVITQSPGKYFVPPPKLCIDMPD.

A run of 8 helical transmembrane segments spans residues 16–36 (LIYA…DGII), 41–61 (WAVF…ASVG), 81–101 (FKAM…EVLV), 113–133 (WLLV…ACVW), 154–174 (FIFI…VVCV), 178–198 (ILMS…VLFL), 212–232 (ITMA…EILL), and 244–264 (YVPV…TTFG).

Belongs to the TMEM185 family.

Its subcellular location is the membrane. The polypeptide is Transmembrane protein 185-like (Danio rerio (Zebrafish)).